A 240-amino-acid chain; its full sequence is Ribitol-5-phosphate cytidylyltransferase (240 aa).

CTP-binding positions include 8–11 (FAGG) and 81–87 (GETGQMS).

The protein belongs to the IspD/TarI cytidylyltransferase family. TarI subfamily.

The enzyme catalyses D-ribitol 5-phosphate + CTP + H(+) = CDP-L-ribitol + diphosphate. It functions in the pathway cell wall biogenesis; poly(ribitol phosphate) teichoic acid biosynthesis. Functionally, catalyzes the transfer of the cytidylyl group of CTP to D-ribitol 5-phosphate. This is Ribitol-5-phosphate cytidylyltransferase from Streptococcus agalactiae serotype V (strain ATCC BAA-611 / 2603 V/R).